We begin with the raw amino-acid sequence, 385 residues long: Mannitol-1-phosphate 5-dehydrogenase (385 aa).

3-14 (ALQFGAGNIGRG) lines the NAD(+) pocket.

The protein belongs to the mannitol dehydrogenase family.

It catalyses the reaction D-mannitol 1-phosphate + NAD(+) = beta-D-fructose 6-phosphate + NADH + H(+). The polypeptide is Mannitol-1-phosphate 5-dehydrogenase (Buchnera aphidicola subsp. Acyrthosiphon pisum (strain Tuc7)).